Here is a 336-residue protein sequence, read N- to C-terminus: Holliday junction branch migration complex subunit RuvB (336 aa).

Positions 1–180 (MRRTGIRLSW…FGIVEHLEYY (180 aa)) are large ATPase domain (RuvB-L). ATP-binding positions include Leu18, Arg19, Gly60, Lys63, Thr64, Thr65, 127-129 (EDF), Arg170, Tyr180, and Arg217. Thr64 contacts Mg(2+). Residues 181–251 (TPEELAQGVM…RALEALAALG (71 aa)) are small ATPAse domain (RuvB-S). The segment at 254 to 336 (ELGLEKRDRE…PPPVGPLLEP (83 aa)) is head domain (RuvB-H). DNA contacts are provided by Arg309 and Arg314.

Belongs to the RuvB family. In terms of assembly, homohexamer. Forms an RuvA(8)-RuvB(12)-Holliday junction (HJ) complex. HJ DNA is sandwiched between 2 RuvA tetramers; dsDNA enters through RuvA and exits via RuvB. An RuvB hexamer assembles on each DNA strand where it exits the tetramer. Each RuvB hexamer is contacted by two RuvA subunits (via domain III) on 2 adjacent RuvB subunits; this complex drives branch migration. In the full resolvosome a probable DNA-RuvA(4)-RuvB(12)-RuvC(2) complex forms which resolves the HJ.

The protein resides in the cytoplasm. It carries out the reaction ATP + H2O = ADP + phosphate + H(+). The RuvA-RuvB-RuvC complex processes Holliday junction (HJ) DNA during genetic recombination and DNA repair, while the RuvA-RuvB complex plays an important role in the rescue of blocked DNA replication forks via replication fork reversal (RFR). RuvA specifically binds to HJ cruciform DNA, conferring on it an open structure. The RuvB hexamer acts as an ATP-dependent pump, pulling dsDNA into and through the RuvAB complex. RuvB forms 2 homohexamers on either side of HJ DNA bound by 1 or 2 RuvA tetramers; 4 subunits per hexamer contact DNA at a time. Coordinated motions by a converter formed by DNA-disengaged RuvB subunits stimulates ATP hydrolysis and nucleotide exchange. Immobilization of the converter enables RuvB to convert the ATP-contained energy into a lever motion, pulling 2 nucleotides of DNA out of the RuvA tetramer per ATP hydrolyzed, thus driving DNA branch migration. The RuvB motors rotate together with the DNA substrate, which together with the progressing nucleotide cycle form the mechanistic basis for DNA recombination by continuous HJ branch migration. Branch migration allows RuvC to scan DNA until it finds its consensus sequence, where it cleaves and resolves cruciform DNA. The polypeptide is Holliday junction branch migration complex subunit RuvB (Thermus thermophilus (strain ATCC BAA-163 / DSM 7039 / HB27)).